The following is a 660-amino-acid chain: GTP-binding protein BRASSINAZOLE INSENSITIVE PALE GREEN 2, chloroplastic (660 aa).

The N-terminal 53 residues, 1 to 53, are a transit peptide targeting the chloroplast; the sequence is MVVLISSTVTICNVKPKLEDGNFRVSRLIHRPEVPFFSGLSNEKKKKCAVSVM. Disordered regions lie at residues 127–158 and 191–212; these read EGDE…DDEM and NDVE…TEEK. The span at 130 to 158 shows a compositional bias: acidic residues; sequence EHVENDELAGFEMVDDDADEEEEGEDDEM. Residues 273–457 enclose the CP-type G domain; sequence STRLIKPMSN…MYDTPGLLHP (185 aa).

It belongs to the TRAFAC class YlqF/YawG GTPase family. As to quaternary structure, binds to chloroplast 16S and 23S ribosomal RNAs. As to expression, mostly expressed in stems, petioles, leaves and flowers and, at low levels, also in roots.

The protein resides in the plastid. It localises to the chloroplast stroma. Functionally, required for brassinosteroid- (BR) mediated post-transcriptional and translational regulation in the chloroplast, including accumulation of chloroplast rRNA. Involved in chloroplast differentiation. The polypeptide is GTP-binding protein BRASSINAZOLE INSENSITIVE PALE GREEN 2, chloroplastic (Arabidopsis thaliana (Mouse-ear cress)).